A 105-amino-acid chain; its full sequence is N(2)-fixation sustaining protein CowN (105 aa).

Belongs to the CowN family.

Is required to sustain N(2)-dependent growth in the presence of low levels of carbon monoxide (CO). Probably acts by protecting the N(2) fixation ability of the nitrogenase complex, which is inactivated in the presence of CO. The sequence is that of N(2)-fixation sustaining protein CowN from Tolumonas auensis (strain DSM 9187 / NBRC 110442 / TA 4).